A 66-amino-acid polypeptide reads, in one-letter code: Putative alpha-neurotoxin RjAa13 (66 aa).

The LCN-type CS-alpha/beta domain maps to 1–60 (KEGYPVDWGNCKYECMSDAYCKDLCVDRKAKSGYCYKLNWSCYCEGLPDDSPIKTNGHCR). Intrachain disulfides connect cysteine 11/cysteine 59, cysteine 15/cysteine 35, cysteine 21/cysteine 42, and cysteine 25/cysteine 44.

It belongs to the long (4 C-C) scorpion toxin superfamily. Sodium channel inhibitor family. Alpha subfamily. In terms of tissue distribution, expressed by the venom gland.

Its subcellular location is the secreted. Alpha toxins bind voltage-independently at site-3 of sodium channels (Nav) and inhibits the inactivation of the activated channels, thereby blocking neuronal transmission. This chain is Putative alpha-neurotoxin RjAa13, found in Rhopalurus junceus (Caribbean blue scorpion).